Here is a 94-residue protein sequence, read N- to C-terminus: Small ribosomal subunit protein uS19 (94 aa).

It belongs to the universal ribosomal protein uS19 family.

Functionally, protein S19 forms a complex with S13 that binds strongly to the 16S ribosomal RNA. This Elusimicrobium minutum (strain Pei191) protein is Small ribosomal subunit protein uS19.